A 129-amino-acid chain; its full sequence is Intraflagellar transport protein 20 homolog (129 aa).

Residues 89 to 121 (VLLQMTIRELTVEKERLRVELEAVRKIEKEQDE) adopt a coiled-coil conformation.

In terms of assembly, component of the IFT complex B composed of at least che-2, che-13, dyf-1, dyf-3, dyf-6, dyf-11, dyf-13, ift-20, ift-74, ift-81, ifta-2, osm-1, osm-5 and osm-6.

It localises to the cell projection. The protein localises to the cilium. Its function is as follows. Component of the intraflagellar transport (IFT) complex B required for transport of proteins in the motile cilium. Required for ciliary entrance and transport of specific ciliary cargo proteins such as che-3 which are related to motility. This Caenorhabditis elegans protein is Intraflagellar transport protein 20 homolog.